Consider the following 385-residue polypeptide: Cell division protein FtsZ (385 aa).

Residues 37–41 (GGGSN), 125–127 (GTG), E156, K160, and D204 each bind GTP.

The protein belongs to the FtsZ family. In terms of assembly, homodimer. Polymerizes to form a dynamic ring structure in a strictly GTP-dependent manner. Interacts directly with several other division proteins.

The protein resides in the cytoplasm. Essential cell division protein that forms a contractile ring structure (Z ring) at the future cell division site. The regulation of the ring assembly controls the timing and the location of cell division. One of the functions of the FtsZ ring is to recruit other cell division proteins to the septum to produce a new cell wall between the dividing cells. Binds GTP and shows GTPase activity. The sequence is that of Cell division protein FtsZ from Helicobacter pylori (strain ATCC 700392 / 26695) (Campylobacter pylori).